Reading from the N-terminus, the 337-residue chain is Secreted effector protein EspF(U) (337 aa).

5 consecutive repeat copies span residues 96–142, 143–189, 190–236, 237–283, and 284–330. The segment at 96-330 is 5 X 48 AA approximate tandem repeats; that stretch reads IKPARSMAEH…RLMQHLAEHG (235 aa). The tract at residues 291–312 is disordered; the sequence is AEHIPPAPNWPAPTPPVQNEQS. Pro residues predominate over residues 295–306; sequence PPAPNWPAPTPP.

It belongs to the EspF(U)/TccP family. As to quaternary structure, interacts with host BAIAP2 and host WASL/N-WASP. Can also interact with host proteins BAIAP2L1 and WAS/WASP.

Its subcellular location is the secreted. The protein localises to the host cytoplasm. Its function is as follows. Required for efficient pedestal formation in host epithelial cells during infection. Acts as an intermediate between Tir (via host BAIAP2) and host WASL/N-WASP. Directly binds and activates WASL/N-WASP, which stimulates actin polymerization and leads to the formation of actin pedestals at the sites of bacterial adhesion. This chain is Secreted effector protein EspF(U) (espF(U)), found in Escherichia coli O157:H7.